A 282-amino-acid chain; its full sequence is sn-glycerol-3-phosphate transport system permease protein UgpE (282 aa).

6 helical membrane-spanning segments follow: residues 14-34 (LMLVLGIIIVAFPIYYTFIAS), 86-106 (LAIAIGKIVISFLSAFAIVFF), 112-132 (MGFFWMIFITLMLPVEVRILP), 146-168 (YAGLTLPLMASATATFLFRQFFL), 201-221 (IAALFVILFIYGWTQYLWPLL), and 248-268 (WNYVMVTAILAIIPPVMVVVL). An ABC transmembrane type-1 domain is found at 78 to 269 (LFNSFVVALA…IPPVMVVVLM (192 aa)).

The protein belongs to the binding-protein-dependent transport system permease family. In terms of assembly, the complex is composed of two ATP-binding proteins (UgpC), two transmembrane proteins (UgpA and UgpE) and a solute-binding protein (UgpB).

The protein resides in the cell inner membrane. Part of the ABC transporter complex UgpBAEC involved in sn-glycerol-3-phosphate (G3P) import. Probably responsible for the translocation of the substrate across the membrane. This is sn-glycerol-3-phosphate transport system permease protein UgpE (ugpE) from Agrobacterium fabrum (strain C58 / ATCC 33970) (Agrobacterium tumefaciens (strain C58)).